The following is a 170-amino-acid chain: Alpha-crystallin A chain (170 aa).

An N-acetylmethionine modification is found at M1. Residues 1–63 (MDVTIQHPWF…RTVLDSGISE (63 aa)) are required for complex formation with BFSP1 and BFSP2. Q6 carries the deamidated glutamine; partial modification. S45 is subject to Phosphoserine. Q50 is modified (deamidated glutamine; partial). The sHSP domain occupies 52-161 (LFRTVLDSGI…SERTIPVSRE (110 aa)). N6-acetyllysine occurs at positions 70 and 99. H100 lines the Zn(2+) pocket. N101 carries the post-translational modification Deamidated asparagine; partial. The Zn(2+) site is built by E102, H107, and H151. A disordered region spans residues 144–170 (PKIVDPSHSERTIPVSREEKPSSAPSS). Positions 148–164 (DPSHSERTIPVSREEKP) are enriched in basic and acidic residues. O-linked (GlcNAc) serine glycosylation occurs at S159.

The protein belongs to the small heat shock protein (HSP20) family. Heteromer composed of three CRYAA and one CRYAB subunits. Inter-subunit bridging via zinc ions enhances stability, which is crucial as there is no protein turn over in the lens. Can also form homodimers and homotetramers (dimers of dimers) which serve as the building blocks of homooligomers. Within homooligomers, the zinc-binding motif is created from residues of 3 different molecules. His-100 and Glu-102 from one molecule are ligands of the zinc ion, and His-107 and His-151 residues from additional molecules complete the site with tetrahedral coordination geometry. Part of a complex required for lens intermediate filament formation composed of BFSP1, BFSP2 and CRYAA. Acetylation at Lys-70 may increase chaperone activity. In terms of processing, undergoes age-dependent proteolytical cleavage at the C-terminus.

It localises to the cytoplasm. The protein resides in the nucleus. Contributes to the transparency and refractive index of the lens. Acts as a chaperone, preventing aggregation of various proteins under a wide range of stress conditions. Required for the correct formation of lens intermediate filaments as part of a complex composed of BFSP1, BFSP2 and CRYAA. The chain is Alpha-crystallin A chain (CRYAA) from Choloepus hoffmanni (Hoffmann's two-fingered sloth).